Consider the following 841-residue polypeptide: MSFFELDENSPKVDQPHGLKKVKLKDHQLTSIAAMRELETQASIVIDKPEIGSKFHASVGYCISDIEEFKDSTFVIETNSAILADKVGAGKTYTTIGLILKALVPKAHDRHITGTDNFSIKMISAKECEPVNLIVVPHNLINQWADFLDKSKLKYLKLNAESDFNAFLDIDYITKVYPLTREQISCKPIKNKPKKLPVKTTKKGGSKTQNKAQNDQKIYERKSLNMKKIRQALDTHNVFLLNVYRYKLFRQIFLTNKRKWARVIIDEMDSSAVPSIFDEYGNFNWFLTATPSAIFNRSCRRYVNKIFGQRQNLLNYFVVKNKEEYVDKSMILPKPFVFMINTMIQRVVAVFKDLIPQEVLQLINSGNMKEAITKLNCDVDTEENIIKILTGKINTELHNLETELEYVNNLIPQDVDAHENRKKNIMNNIARCKTKLESIKEKINSIKDECCFICTDPFENPTIMNCCKSIFCLKCLLTTLKTVGSKCPYCRHAIKSNKDYQIISSGGTSNKKKKSEIVGKYKFNEMDKADVLEQVLSYISKNDENPKILIFSDYSQTFEKITKNIAKANLQYAYLSGTPAHITNLITEFENGITNILMLNSQNFGSGLNLQSANYLILYHRMLPELETQVIGRAQRFGRKNNLRVIFMVNDNENRDCRLDSKPINILSDSELWMITNPTDLNEEPDEESDEGSDEDVEKSKDKKSSDKKSSDKKKSEKKSSDKKSSNKKNSKKKTYVKPKSSKKTSQKVKKTDSDNESELSGLSDSDDLDDSDDLGILSDSSDSDDFGNLSDSDDLSDSDESEIEIPKKSKKTSKSSKKNKIGGSNKTLKKKAPVRKLIKV.

The Helicase ATP-binding domain maps to 72–309 (STFVIETNSA…RRYVNKIFGQ (238 aa)). 85 to 92 (DKVGAGKT) is a binding site for ATP. Over residues 195–205 (KLPVKTTKKGG) the composition is skewed to basic residues. The segment at 195-215 (KLPVKTTKKGGSKTQNKAQND) is disordered. Positions 206-215 (SKTQNKAQND) are enriched in polar residues. The DEAD box signature appears at 266–269 (DEMD). A coiled-coil region spans residues 413–450 (QDVDAHENRKKNIMNNIARCKTKLESIKEKINSIKDEC). The RING-type; degenerate zinc finger occupies 451-491 (CFICTDPFENPTIMNCCKSIFCLKCLLTTLKTVGSKCPYCR). The Helicase C-terminal domain maps to 531–682 (VLEQVLSYIS…WMITNPTDLN (152 aa)). Residues 678 to 841 (PTDLNEEPDE…KAPVRKLIKV (164 aa)) form a disordered region. The segment covering 681 to 697 (LNEEPDEESDEGSDEDV) has biased composition (acidic residues). Residues 698–725 (EKSKDKKSSDKKSSDKKKSEKKSSDKKS) are compositionally biased toward basic and acidic residues. Residues 726 to 749 (SNKKNSKKKTYVKPKSSKKTSQKV) show a composition bias toward basic residues. Composition is skewed to acidic residues over residues 765 to 774 (DSDDLDDSDD) and 782 to 804 (SDSD…ESEI). Composition is skewed to basic residues over residues 809 to 821 (KSKK…KKNK) and 828 to 841 (TLKK…LIKV).

This chain is Putative helicase R592, found in Acanthamoeba polyphaga mimivirus (APMV).